We begin with the raw amino-acid sequence, 125 residues long: Glucose-1-phosphate adenylyltransferase small subunit (125 aa).

The protein belongs to the bacterial/plant glucose-1-phosphate adenylyltransferase family. As to quaternary structure, heterotetramer. As to expression, leaves.

The protein resides in the plastid. It localises to the chloroplast. Its subcellular location is the amyloplast. It catalyses the reaction alpha-D-glucose 1-phosphate + ATP + H(+) = ADP-alpha-D-glucose + diphosphate. The protein operates within glycan biosynthesis; starch biosynthesis. With respect to regulation, activated by 3'phosphoglycerate, inhibited by orthophosphate. Allosteric regulation. Its function is as follows. This protein plays a role in synthesis of starch. It catalyzes the synthesis of the activated glycosyl donor, ADP-glucose from Glc-1-P and ATP. This is Glucose-1-phosphate adenylyltransferase small subunit (GLG1) from Zea mays (Maize).